The sequence spans 457 residues: MFSRPFVTPVTIDLQVKSITAGNMWEGLGFYKPANSKSNQMICSKGFRLNCSIDREMIVITKALVDSIAERSSETYEPGLSTVVMNFENEFDPYEAVSTPIYQTATFKQPSATVNGPYDYTRSGNPTRDALERLLAKLDKADRAFCFGSGMAALSAVSQLFENGDEIIAGDDIYGGSDRLLSSVIPRTGVVVKRVNTSDLEEVASAFGPATKLVWLESPTNPRLQISDIGKIAEMAHARGVLVLVDNSIMSPVLCQPLELGADIVMHSATKFIGGHSYIMAGVIAVKGERLAKEMYFLQNAVGSGLAPFDCWLCLQGIKTMELRVEKQQKSAQKIAEFLAFHPRVKKVNYAGLPGHPGRDLHYSQAKGAGSVLSFLTGSLALSKHVVESTKYFSITVSFGSVKSLISMPCFMSHASIPVAVREARGLTEDLVRISVGIENVDDLIADLDQALSSGPL.

The N-terminal 51 residues, 1–51, are a transit peptide targeting the chloroplast; it reads MFSRPFVTPVTIDLQVKSITAGNMWEGLGFYKPANSKSNQMICSKGFRLNC. Pyridoxal 5'-phosphate is bound by residues Tyr-120, Arg-122, Gly-150, Met-151, Ser-268, and Thr-270. Residue Lys-271 is modified to N6-(pyridoxal phosphate)lysine.

This sequence belongs to the trans-sulfuration enzymes family. Forms homodimers. May form homotetramers from two homodimers. Pyridoxal 5'-phosphate serves as cofactor.

Its subcellular location is the plastid. It localises to the chloroplast. The enzyme catalyses L,L-cystathionine + H2O = L-homocysteine + pyruvate + NH4(+). It catalyses the reaction an S-substituted L-cysteine + H2O = a thiol + pyruvate + NH4(+). In terms of biological role, catalyzes the degradation of cystathionine. The chain is Cystathionine beta-lyase, chloroplastic from Mimosa pudica (Sensitive plant).